Reading from the N-terminus, the 329-residue chain is Meiotic drive suppressor wtf21 (329 aa).

Residues 1–68 (MKNNYTSLKS…RENNPSRSTD (68 aa)) are disordered. Over residues 19 to 30 (KTDHEIDLEKGP) the composition is skewed to basic and acidic residues. A run of 5 helical transmembrane segments spans residues 73–95 (FLIKLLISFTPIYVLNVLAICYL), 110–132 (WTLFGFWCLVCTLALIFLTYFYE), 165–182 (IIIWILWLIICCILFVYI), 192–214 (ALICSTCTISAVLLLIVSSVCIP), and 290–312 (GIAFILGGIGNAMMGLANAIRGA).

The protein belongs to the WTF family. Homomer. Interacts with other proteins that exhibit high sequence similarity.

Its subcellular location is the spore membrane. It is found in the vacuole membrane. Its function is as follows. Acts as a suppressor component of the dual wtf meiotic drive system, and can suppress but not confer meiotic drive by compatible poisons. Wtf meiotic drive systems promote unequal transmission of alleles from the parental zygote to progeny spores by encoding a poison and an antidote from the same locus; the poison is trans-acting and forms toxic aggregates in all spores within an ascus, wherease the antidote is spore-specific and targets aggregates for degradation by the vacuole. Meiotic drive by wtf systems therefore lead to poisoning of all progeny that do not inherit the dual poison/antidote allele, or express a compatible antidote. The protein is Meiotic drive suppressor wtf21 of Schizosaccharomyces pombe (strain 972 / ATCC 24843) (Fission yeast).